The chain runs to 310 residues: UPF0761 membrane protein VF_0100 (310 aa).

The next 6 helical transmembrane spans lie at tyrosine 34–leucine 54, methionine 97–aspartate 117, phenylalanine 136–alanine 156, leucine 178–valine 198, histidine 207–alanine 227, and alanine 242–isoleucine 262.

This sequence belongs to the UPF0761 family.

The protein resides in the cell inner membrane. The sequence is that of UPF0761 membrane protein VF_0100 from Aliivibrio fischeri (strain ATCC 700601 / ES114) (Vibrio fischeri).